The chain runs to 306 residues: SPbeta prophage-derived uncharacterized protein YonG (306 aa).

This is SPbeta prophage-derived uncharacterized protein YonG (yonG) from Bacillus subtilis (strain 168).